We begin with the raw amino-acid sequence, 87 residues long: Protein anon-73B1 (87 aa).

A helical transmembrane segment spans residues 25-47; that stretch reads LLIRYGLYVGALFQFVCISAAVL. Residues 50–87 form a disordered region; it reads NNPDSQSNPETGEVTEREGEPVRTRLHKIRKLEKKKRR. The segment covering 63–72 has biased composition (basic and acidic residues); that stretch reads VTEREGEPVR. Residues 73–87 are compositionally biased toward basic residues; it reads TRLHKIRKLEKKKRR.

The protein belongs to the UPF0239 family.

The protein resides in the membrane. The protein is Protein anon-73B1 (anon-73B1) of Drosophila simulans (Fruit fly).